Here is a 33-residue protein sequence, read N- to C-terminus: Kunitz-type serine protease inhibitor hainantoxin F7-25.66 (33 aa).

Positions 4 to 33 (CRLPSDRGRCKASFERWYFNGRTCAKFIYG) constitute a BPTI/Kunitz inhibitor domain.

This sequence belongs to the venom Kunitz-type family. 02 (native) subfamily. In terms of tissue distribution, expressed by the venom gland.

The protein localises to the secreted. Its function is as follows. Serine protease inhibitor that inhibits trypsin at a molar ratio of 1:1. This chain is Kunitz-type serine protease inhibitor hainantoxin F7-25.66, found in Cyriopagopus hainanus (Chinese bird spider).